A 206-amino-acid polypeptide reads, in one-letter code: Small ribosomal subunit protein uS5 (206 aa).

The span at 1 to 15 shows a compositional bias: polar residues; the sequence is MTDTPTKQEIQSKND. The tract at residues 1-50 is disordered; sequence MTDTPTKQEIQSKNDNVPGATPVEQKKNNRNDRKRNRRGDSKNLERDSDW. Basic and acidic residues predominate over residues 38 to 50; the sequence is RGDSKNLERDSDW. The S5 DRBM domain occupies 50–113; the sequence is WQERVVQIRR…SDGKKNLVRV (64 aa).

The protein belongs to the universal ribosomal protein uS5 family. Part of the 30S ribosomal subunit. Contacts proteins S4 and S8.

With S4 and S12 plays an important role in translational accuracy. Its function is as follows. Located at the back of the 30S subunit body where it stabilizes the conformation of the head with respect to the body. In Prochlorococcus marinus (strain MIT 9301), this protein is Small ribosomal subunit protein uS5.